Reading from the N-terminus, the 259-residue chain is 1,2-dihydroxy-1,2-dihydronaphthalene dehydrogenase (259 aa).

8–32 contacts NAD(+); sequence SITGAGSGIGLELVRSFKSAGYYVS. Ser-140 serves as a coordination point for substrate. Tyr-153 (proton acceptor) is an active-site residue.

It belongs to the short-chain dehydrogenases/reductases (SDR) family.

The catalysed reaction is (1R,2S)-1,2-dihydronaphthalene-1,2-diol + NAD(+) = naphthalene-1,2-diol + NADH + H(+). The enzyme catalyses cis-1,2-dihydroxy-1,2-dihydrodibenzothiophene + NAD(+) = 1,2-dihydroxydibenzothiophene + NADH + H(+). It participates in aromatic compound metabolism; naphthalene degradation. Catalyzes the oxidation of naphthalene dihydrodiol into 1,2-dihydroxynaphthalene. The chain is 1,2-dihydroxy-1,2-dihydronaphthalene dehydrogenase (nahB) from Pseudomonas putida (Arthrobacter siderocapsulatus).